Consider the following 779-residue polypeptide: Cell division control protein 4 (779 aa).

The tract at residues 39–80 (AGTHRNSSTAKTVETEDGEEDIDEYQRKRAAGSGESTPERSD) is disordered. The Nuclear localization signal signature appears at 82–85 (KRVK). Ser-104 carries the post-translational modification Phosphoserine. Positions 272–319 (RDLITSLPFEISLKIFNYLQFEDIINSLGVSQNWNKIIRKSTSLWKKL) constitute an F-box domain. WD repeat units lie at residues 380–408 (HMTS…RVYD), 420–449 (GHDG…RVWD), 461–493 (GHNS…HVWK), 528–556 (GHMA…IVWD), 568–598 (GHTD…RIWD), 630–658 (GHTA…RGWD), and 669–698 (HHTN…NIYN).

As to quaternary structure, interacts with DCD53 and SKP1. Component of the SCF(CDC4) complex containing CDC53, SKP1, RBX1 and CDC4. CDC34. Interacts with CDC6 and CIC1. Interacts with SIC1; the interaction involves a SIC1 double phosphorylated motif (degron). Homodimerizes; the dimerization increases SIC1 ubiquitination in vitro.

It is found in the nucleus. It participates in protein modification; protein ubiquitination. Functionally, substrate recognition component of a SCF (SKP1-CUL1-F-box protein) E3 ubiquitin-protein ligase complex which mediates the ubiquitination and subsequent proteasomal degradation of target proteins. Recognizes and binds to phosphorylated target proteins. Directs ubiquitination of the phosphorylated CDK inhibitor SIC1. Involved in the degradation of CDC6 together with CDC34/UBC3 and CDC53, and in restricting the degradation of FAR1 to the nucleus. Is essential for initiation of DNA replication and separation of the spindle pole bodies to form the poles of the mitotic spindle. It also plays a role in bud development, fusion of zygotic nuclei after conjugation and various aspects of sporulation. Required for HTA1-HTB1 locus transcription activation. Required for G1/S and G2/M transition. The chain is Cell division control protein 4 (CDC4) from Saccharomyces cerevisiae (strain ATCC 204508 / S288c) (Baker's yeast).